The primary structure comprises 115 residues: T cell receptor beta variable 12-5 (115 aa).

The signal sequence occupies residues 1 to 21 (MATRLLCCVVLCLLGEELIDA). The 94-residue stretch at 22 to 115 (RVTQTPRHKV…SAVYFCASGL (94 aa)) folds into the Ig-like domain. The cysteines at positions 42 and 111 are disulfide-linked.

As to quaternary structure, alpha-beta TR is a heterodimer composed of an alpha and beta chain; disulfide-linked. The alpha-beta TR is associated with the transmembrane signaling CD3 coreceptor proteins to form the TR-CD3 (TcR or TCR). The assembly of alpha-beta TR heterodimers with CD3 occurs in the endoplasmic reticulum where a single alpha-beta TR heterodimer associates with one CD3D-CD3E heterodimer, one CD3G-CD3E heterodimer and one CD247 homodimer forming a stable octameric structure. CD3D-CD3E and CD3G-CD3E heterodimers preferentially associate with TR alpha and TR beta chains, respectively. The association of the CD247 homodimer is the last step of TcR assembly in the endoplasmic reticulum and is required for transport to the cell surface.

It localises to the cell membrane. V region of the variable domain of T cell receptor (TR) beta chain that participates in the antigen recognition. Alpha-beta T cell receptors are antigen specific receptors which are essential to the immune response and are present on the cell surface of T lymphocytes. Recognize peptide-major histocompatibility (MH) (pMH) complexes that are displayed by antigen presenting cells (APC), a prerequisite for efficient T cell adaptive immunity against pathogens. Binding of alpha-beta TR to pMH complex initiates TR-CD3 clustering on the cell surface and intracellular activation of LCK that phosphorylates the ITAM motifs of CD3G, CD3D, CD3E and CD247 enabling the recruitment of ZAP70. In turn ZAP70 phosphorylates LAT, which recruits numerous signaling molecules to form the LAT signalosome. The LAT signalosome propagates signal branching to three major signaling pathways, the calcium, the mitogen-activated protein kinase (MAPK) kinase and the nuclear factor NF-kappa-B (NF-kB) pathways, leading to the mobilization of transcription factors that are critical for gene expression and essential for T cell growth and differentiation. The T cell repertoire is generated in the thymus, by V-(D)-J rearrangement. This repertoire is then shaped by intrathymic selection events to generate a peripheral T cell pool of self-MH restricted, non-autoaggressive T cells. Post-thymic interaction of alpha-beta TR with the pMH complexes shapes TR structural and functional avidity. The protein is T cell receptor beta variable 12-5 of Homo sapiens (Human).